Reading from the N-terminus, the 316-residue chain is Glutathione synthetase (316 aa).

In terms of domain architecture, ATP-grasp spans 125 to 310 (KLFTAWFSDL…ITGMLMDAIE (186 aa)). 151–207 (WEKHSDIILKPLDGMGGASIFRVKEGDPNLGVIAETLTEHGTCYCMAQNYLPAIKDG) lines the ATP pocket. Residues glutamate 281 and asparagine 283 each coordinate Mg(2+).

It belongs to the prokaryotic GSH synthase family. The cofactor is Mg(2+). It depends on Mn(2+) as a cofactor.

The catalysed reaction is gamma-L-glutamyl-L-cysteine + glycine + ATP = glutathione + ADP + phosphate + H(+). It participates in sulfur metabolism; glutathione biosynthesis; glutathione from L-cysteine and L-glutamate: step 2/2. This Shigella flexneri protein is Glutathione synthetase.